We begin with the raw amino-acid sequence, 225 residues long: Membrane-spanning 4-domains subfamily A member 4D (225 aa).

The Cytoplasmic segment spans residues 1–42; sequence MQGLAQTTMAVVPGGAPPSENSVIKSQMWNKNKEKFLKGEPK. A helical membrane pass occupies residues 43-63; the sequence is VLGAIQVMIAFINFSLGIIII. Residues 64–73 lie on the Extracellular side of the membrane; the sequence is LNRVSERFMS. The chain crosses the membrane as a helical span at residues 74–94; that stretch reads VLLLAPFWGSIMFIFSGSLSI. The Cytoplasmic segment spans residues 95 to 113; sequence AAGVKPTKAMIISSLSVNT. Residues 114 to 134 traverse the membrane as a helical segment; sequence ISSVLAVAASIIGVISVISGV. The Extracellular portion of the chain corresponds to 135-148; that stretch reads FRQFRSQPAIASLD. A helical membrane pass occupies residues 149–169; it reads VLMTILNMLEFCIAVSVSAFG. Residues 170–225 are Cytoplasmic-facing; that stretch reads CKASCCNSSEVLVVLPSNSAVTVTAPPMILQPLPPSECQGKNVPENLYRNQPGEIV.

This sequence belongs to the MS4A family. As to expression, expressed in thymus, spleen, peripheral lymph node, liver, kidney, heart, colon, lung, and testes.

It is found in the membrane. Its function is as follows. May be involved in signal transduction as a component of a multimeric receptor complex. This Mus musculus (Mouse) protein is Membrane-spanning 4-domains subfamily A member 4D (Ms4a4d).